Reading from the N-terminus, the 357-residue chain is Glycerol-3-phosphate dehydrogenase [NAD(P)+] (357 aa).

Ser30, Phe31, Arg51, and Lys124 together coordinate NADPH. Residues Lys124 and Gly152 each coordinate sn-glycerol 3-phosphate. Ala156 contributes to the NADPH binding site. The sn-glycerol 3-phosphate site is built by Lys207, Asp260, Ser270, Arg271, and Asn272. Lys207 functions as the Proton acceptor in the catalytic mechanism. Arg271 serves as a coordination point for NADPH. Glu297 is an NADPH binding site.

The protein belongs to the NAD-dependent glycerol-3-phosphate dehydrogenase family.

It localises to the cytoplasm. It catalyses the reaction sn-glycerol 3-phosphate + NAD(+) = dihydroxyacetone phosphate + NADH + H(+). The catalysed reaction is sn-glycerol 3-phosphate + NADP(+) = dihydroxyacetone phosphate + NADPH + H(+). The protein operates within membrane lipid metabolism; glycerophospholipid metabolism. Its function is as follows. Catalyzes the reduction of the glycolytic intermediate dihydroxyacetone phosphate (DHAP) to sn-glycerol 3-phosphate (G3P), the key precursor for phospholipid synthesis. The chain is Glycerol-3-phosphate dehydrogenase [NAD(P)+] from Acinetobacter baumannii (strain SDF).